The chain runs to 249 residues: Tabinhibitin 4 (249 aa).

The N-terminal stretch at 1–23 (MTLNVYFVLLSPYSLQSVPLPLT) is a signal peptide. The Cell attachment site motif lies at 31–33 (RGD). Residues 64 to 207 (LQKTNWLRGV…LKRALFTCNF (144 aa)) form the SCP domain. A Cell attachment site motif is present at residues 220 to 222 (RGD).

Belongs to the CRISP family. As to expression, expressed in salivary glands.

The protein localises to the secreted. Its function is as follows. Inhibits platelet aggregation induced by all agonists tested (ADP, arachidonic acid, the thromboxane A2 analog U46619, thrombin, and snake venom snaclecs (TMVA that activates platelet through GPIB, and stejnulxin that specifically acts through GPVI (GP6))). May act by competing with fibrinogen for binding to glycoprotein IIb/IIIa (ITGA2B/ITGB3). This is Tabinhibitin 4 from Tabanus yao (Horsefly).